We begin with the raw amino-acid sequence, 217 residues long: Enolase-phosphatase E1 (217 aa).

Mg(2+) contacts are provided by Asp-9 and Glu-11. Substrate contacts are provided by residues 112–113 and Lys-151; that span reads SS. Asp-176 contacts Mg(2+).

This sequence belongs to the HAD-like hydrolase superfamily. MasA/MtnC family. Monomer. Mg(2+) is required as a cofactor.

It is found in the cytoplasm. The protein localises to the nucleus. It catalyses the reaction 5-methylsulfanyl-2,3-dioxopentyl phosphate + H2O = 1,2-dihydroxy-5-(methylsulfanyl)pent-1-en-3-one + phosphate. It functions in the pathway amino-acid biosynthesis; L-methionine biosynthesis via salvage pathway; L-methionine from S-methyl-5-thio-alpha-D-ribose 1-phosphate: step 3/6. The protein operates within amino-acid biosynthesis; L-methionine biosynthesis via salvage pathway; L-methionine from S-methyl-5-thio-alpha-D-ribose 1-phosphate: step 4/6. In terms of biological role, bifunctional enzyme that catalyzes the enolization of 2,3-diketo-5-methylthiopentyl-1-phosphate (DK-MTP-1-P) into the intermediate 2-hydroxy-3-keto-5-methylthiopentenyl-1-phosphate (HK-MTPenyl-1-P), which is then dephosphorylated to form the acireductone 1,2-dihydroxy-3-keto-5-methylthiopentene (DHK-MTPene). The sequence is that of Enolase-phosphatase E1 from Lachancea thermotolerans (strain ATCC 56472 / CBS 6340 / NRRL Y-8284) (Yeast).